The chain runs to 504 residues: Pentatricopeptide repeat-containing protein At5g16640, mitochondrial (504 aa).

The transit peptide at 1–43 (MRRSISSKAKSFLHRNLLYSGNSGTSPSSSFSICGFCFSRRAY) directs the protein to the mitochondrion. PPR repeat units lie at residues 45-79 (NGSD…RPLP), 80-114 (SIAD…GIPH), 115-149 (NLCT…GHEP), 150-184 (SIVT…GYKP), 185-219 (NVVI…GIGP), 220-254 (DVVT…EIYP), 255-289 (DVFT…SLDP), 290-324 (DIVT…GCFP), 325-359 (DVVT…GVVR), 360-394 (NTVT…GVHP), 395-429 (NIIT…GMDA), 430-464 (DIVT…GLMP), and 465-499 (DIWT…GILP).

It belongs to the PPR family. P subfamily.

Its subcellular location is the mitochondrion. This chain is Pentatricopeptide repeat-containing protein At5g16640, mitochondrial, found in Arabidopsis thaliana (Mouse-ear cress).